A 353-amino-acid chain; its full sequence is Abasic site processing protein HMCES (353 aa).

The Nucleophile role is filled by Cys-2. Cys-2 bears the Thiazolidine linkage to a ring-opened DNA abasic site mark. Glu-127 is an active-site residue. Residues Lys-148 and Lys-151 each participate in a glycyl lysine isopeptide (Lys-Gly) (interchain with G-Cter in SUMO2) cross-link. Phosphoserine is present on Ser-160. Residues Lys-274 and Lys-275 each participate in a glycyl lysine isopeptide (Lys-Gly) (interchain with G-Cter in SUMO2) cross-link. Positions 292 to 353 (TKSPKKEVPD…DEPVAKRPNS (62 aa)) are disordered. Residue Ser-294 is modified to Phosphoserine. The segment covering 295–307 (PKKEVPDSPKKDA) has biased composition (basic and acidic residues). Lys-305 participates in a covalent cross-link: Glycyl lysine isopeptide (Lys-Gly) (interchain with G-Cter in SUMO2). A Phosphoserine modification is found at Ser-321. The short motif at 332 to 338 (SLLDRWL) is the PIP-box element. Basic and acidic residues predominate over residues 336-353 (RWLKQEKEDEPVAKRPNS). Glycyl lysine isopeptide (Lys-Gly) (interchain with G-Cter in SUMO2) cross-links involve residues Lys-339 and Lys-342.

This sequence belongs to the SOS response-associated peptidase family. As to quaternary structure, interacts (via PIP-box motif) with PCNA. In terms of processing, ubiquitinated; the covalent HMCES DNA-protein cross-link is ubiquitinated, leading to its degradation by the proteasome.

The protein localises to the chromosome. With respect to regulation, formation and reversal of DNA-protein cross-link depends on DNA context. Catalyzes formation of the thiazolidine linkage in presence of abasic sites in single-stranded DNA. Mediates the reversal of the thiazolidine cross-link in presence of double stranded DNA. Sensor of abasic sites in single-stranded DNA (ssDNA) required to preserve genome integrity by promoting error-free repair of abasic sites. Acts as an enzyme that recognizes and binds abasic sites in ssDNA at replication forks and chemically modifies the lesion by forming a covalent cross-link with DNA: forms a stable thiazolidine linkage between a ring-opened abasic site and the alpha-amino and sulfhydryl substituents of its N-terminal catalytic cysteine residue. Promotes error-free repair by protecting abasic sites from translesion synthesis (TLS) polymerases and endonucleases that are error-prone and would generate mutations and double-strand breaks. The HMCES DNA-protein cross-link is then either reversed or degraded. HMCES is able to catalyze the reversal of its thiazolidine cross-link and cycle between a cross-link and a non-cross-linked state depending on DNA context: mediates self-reversal of the thiazolidine cross-link in double stranded DNA, allowing APEX1 to initiate downstream repair of abasic sites. The HMCES DNA-protein cross-link can also be degraded by the SPRTN metalloprotease following unfolding by the BRIP1/FANCJ helicase. Has preference for ssDNA, but can also accommodate double-stranded DNA with 3' or 5' overhang (dsDNA), and dsDNA-ssDNA 3' junction. Plays a protective role during somatic hypermutation of immunoglobulin genes in B-cells: acts via its ability to form covalent cross-links with abasic sites, thereby limiting the accumulation of deletions in somatic hypermutation target regions. Also involved in class switch recombination (CSR) in B-cells independently of the formation of a DNA-protein cross-link: acts by binding and protecting ssDNA overhangs to promote DNA double-strand break repair through the microhomology-mediated alternative-end-joining (Alt-EJ) pathway. Acts as a protease: mediates autocatalytic processing of its N-terminal methionine in order to expose the catalytic cysteine. The chain is Abasic site processing protein HMCES from Rattus norvegicus (Rat).